The primary structure comprises 918 residues: Band 3 anion exchange protein (918 aa).

Residues 1–48 (MENDLSFGEDVMSYEEESDSAFPSPIRPTPPGHSGNYDLEQSRQEEDS) form a disordered region. Residues 1 to 392 (MENDLSFGED…ISDFTDALDP (392 aa)) lie on the Cytoplasmic side of the membrane. Residues 393 to 416 (QVLAAVIFIYFAALSPAITFGGLL) traverse the membrane as a helical segment. At 417–424 (ADKTEHMM) the chain is on the extracellular side. A helical transmembrane segment spans residues 425–445 (GVSELMISTCVQGIIFAFIAA). Topologically, residues 446–448 (QPT) are cytoplasmic. A discontinuously helical membrane pass occupies residues 449–465 (LVIGFSGPLLVFEEAFF). Residues 466–474 (AFCKSQEIE) are Extracellular-facing. Residues 475-495 (YIVGRIWVGLWLVIIVVVIVA) form a helical membrane-spanning segment. Residues 496-507 (VEGSFLVKFISR) are Cytoplasmic-facing. The chain crosses the membrane as a helical span at residues 508–530 (FTQEIFSILISLIFIYETFSKLG). Residues 531–583 (KIFKAHPLVLNYEHLNDSLDNPFHPVVKEHIEYHEDGNKTVHEVIHERAYPNT) are Extracellular-facing. N546 and N568 each carry an N-linked (GlcNAc...) asparagine glycan. Residues 584–604 (ALLSMCLMFGCFFIAYFLRQF) form a helical membrane-spanning segment. Topologically, residues 605-615 (KNGHFLPGPIR) are cytoplasmic. Residues 616 to 636 (RMIGDFGVPIAIFFMIAVDIT) traverse the membrane as a helical segment. At 637-676 (IEDAYTQKLVVPKGLMVSNPNARGWFINPLGEKKPFPAWM) the chain is on the extracellular side. A helical transmembrane segment spans residues 677 to 697 (MGACCVPALLVFILIFLESQI). At 698–713 (TTLIVSKPERKMVKGS) the chain is on the cytoplasmic side. A helical membrane pass occupies residues 714 to 732 (GFHLDLLILVTMGGIASLF). Residues 733 to 750 (GVPWLSAATVRSVTHANA) traverse the membrane as a discontinuously helical segment. Over 751–769 (LTVMSKGPKPEIEKVLEQR) the chain is Cytoplasmic. 2 helical membrane-spanning segments follow: residues 770–790 (ISGM…PILK) and 791–809 (MIPM…ITSL). Residues 810–847 (SGIQMWDRMLLLIVPRKYYPADAYAQRVTTMKMHLFTL) lie on the Cytoplasmic side of the membrane. An intramembrane region (discontinuously helical) is located at residues 848–878 (IQMVCLGALWMVKMSAFSLALPFVLILTIPL). Residue C852 is the site of S-palmitoyl cysteine attachment. Over 879-918 (RMAITGTLFTDKEMKCLDASDGKVKFEEEPGEDMYESPLP) the chain is Cytoplasmic.

It belongs to the anion exchanger (TC 2.A.31) family. In terms of assembly, a dimer in solution, it spans the membrane asymmetrically and appears to be tetrameric.

It is found in the cell membrane. The enzyme catalyses hydrogencarbonate(in) + chloride(out) = hydrogencarbonate(out) + chloride(in). Functions both as a transporter that mediates electroneutral anion exchange across the cell membrane and as a structural protein. Major integral membrane glycoprotein of the erythrocyte membrane; required for normal flexibility and stability of the erythrocyte membrane and for normal erythrocyte shape via the interactions of its cytoplasmic domain with cytoskeletal proteins, glycolytic enzymes, and hemoglobin. Functions as a transporter that mediates the 1:1 exchange of inorganic anions across the erythrocyte membrane. Mediates chloride-bicarbonate exchange in the kidney, and is required for normal acidification of the urine. The polypeptide is Band 3 anion exchange protein (slc4a1) (Oncorhynchus mykiss (Rainbow trout)).